The chain runs to 351 residues: Small ribosomal subunit protein uS2 (351 aa).

Positions 302–351 (QNNYDPSKRGYNPKYVNHKSTFNKFNNKKPAEATSQAKTNEKIVIKAETN) are disordered. Basic and acidic residues predominate over residues 340-351 (TNEKIVIKAETN).

This sequence belongs to the universal ribosomal protein uS2 family.

This is Small ribosomal subunit protein uS2 from Ureaplasma urealyticum serovar 10 (strain ATCC 33699 / Western).